We begin with the raw amino-acid sequence, 364 residues long: Dihydroorotase (364 aa).

His-14, His-16, Lys-98, His-137, His-180, and Asp-258 together coordinate Zn(2+). Residue Lys-98 is modified to N6-carboxylysine.

It belongs to the metallo-dependent hydrolases superfamily. DHOase family. Class II DHOase subfamily. The cofactor is Zn(2+).

It carries out the reaction (S)-dihydroorotate + H2O = N-carbamoyl-L-aspartate + H(+). It participates in pyrimidine metabolism; UMP biosynthesis via de novo pathway; (S)-dihydroorotate from bicarbonate: step 3/3. Catalyzes the conversion of ureidosuccinic acid (USA) to dihydroorotate, the third step of the de novo pyrimidine biosynthetic pathway. This chain is Dihydroorotase (URA4), found in Saccharomyces cerevisiae (strain ATCC 204508 / S288c) (Baker's yeast).